The following is a 74-amino-acid chain: Antimicrobial peptide 36.4 (74 aa).

Positions 1–22 (MKVNVLLAVFLVVMVVTDHCHA) are cleaved as a signal peptide. Lysine 39 carries the post-translational modification Lysine amide. A propeptide spanning residues 44–74 (LQMEARFQPQNKNYRKRELDLENLFTHMPDY) is cleaved from the precursor.

This sequence belongs to the non-disulfide-bridged peptide (NDBP) superfamily. Short antimicrobial peptide (group 4) family. As to expression, expressed by the venom gland.

The protein localises to the secreted. It is found in the target cell membrane. Functionally, cationic host defense peptide that have antibacterial activity by breaking membranes. Is more effective on Gram-positive than on Gram-negative bacteria. The sequence is that of Antimicrobial peptide 36.4 from Lychas mucronatus (Chinese swimming scorpion).